Reading from the N-terminus, the 637-residue chain is ATP-dependent zinc metalloprotease FtsH (637 aa).

At 1-6 (MNNQGR) the chain is on the cytoplasmic side. A helical membrane pass occupies residues 7 to 27 (SILAWAALFIFVILLFNVFQS). The Periplasmic segment spans residues 28–103 (DGLLGVRNNI…VVPLETRMNT (76 aa)). The helical transmembrane segment at 104 to 124 (FLGFLISWFPMLLLIGVWVFF) threads the bilayer. Residues 125–637 (MRQMHGGGKA…TKDKKENIIS (513 aa)) lie on the Cytoplasmic side of the membrane. Residue 195-202 (GPPGTGKT) participates in ATP binding. Position 417 (H417) interacts with Zn(2+). E418 is a catalytic residue. Zn(2+) is bound by residues H421 and D495.

The protein in the central section; belongs to the AAA ATPase family. It in the C-terminal section; belongs to the peptidase M41 family. As to quaternary structure, homohexamer. The cofactor is Zn(2+).

The protein localises to the cell inner membrane. Functionally, acts as a processive, ATP-dependent zinc metallopeptidase for both cytoplasmic and membrane proteins. Plays a role in the quality control of integral membrane proteins. The polypeptide is ATP-dependent zinc metalloprotease FtsH (Rickettsia prowazekii (strain Madrid E)).